The following is a 160-amino-acid chain: MIKNRKKKSYTSVYALGQYISMSAHKARRVIDQIRGRSYEEALMILELMPYRGCYPIFKLVYSAAANASHNKGFKETNLVISKAEVNQGNTVKKLKPRARGRSFPIKRSTCHITIVVEDISFYQQYEEYLRYLKNPGCSNENRNLTCYDTYSSGGPWDKK.

Belongs to the universal ribosomal protein uL22 family. Part of the 50S ribosomal subunit.

The protein resides in the plastid. Its subcellular location is the chloroplast. In terms of biological role, this protein binds specifically to 23S rRNA. The globular domain of the protein is located near the polypeptide exit tunnel on the outside of the subunit, while an extended beta-hairpin is found that lines the wall of the exit tunnel in the center of the 70S ribosome. In Lepidium virginicum (Virginia pepperweed), this protein is Large ribosomal subunit protein uL22c (rpl22).